The primary structure comprises 153 residues: uncharacterized protein (153 aa).

The signal sequence occupies residues 1–19; sequence MKACLLLFFYFSFICQLHG.

This is an uncharacterized protein from Escherichia coli (strain K12).